A 251-amino-acid polypeptide reads, in one-letter code: Ubiquinone/menaquinone biosynthesis C-methyltransferase UbiE (251 aa).

Residues threonine 74, aspartate 95, and 123 to 124 (NA) each bind S-adenosyl-L-methionine.

Belongs to the class I-like SAM-binding methyltransferase superfamily. MenG/UbiE family.

It catalyses the reaction a 2-demethylmenaquinol + S-adenosyl-L-methionine = a menaquinol + S-adenosyl-L-homocysteine + H(+). It carries out the reaction a 2-methoxy-6-(all-trans-polyprenyl)benzene-1,4-diol + S-adenosyl-L-methionine = a 5-methoxy-2-methyl-3-(all-trans-polyprenyl)benzene-1,4-diol + S-adenosyl-L-homocysteine + H(+). It participates in quinol/quinone metabolism; menaquinone biosynthesis; menaquinol from 1,4-dihydroxy-2-naphthoate: step 2/2. Its pathway is cofactor biosynthesis; ubiquinone biosynthesis. Functionally, methyltransferase required for the conversion of demethylmenaquinol (DMKH2) to menaquinol (MKH2) and the conversion of 2-polyprenyl-6-methoxy-1,4-benzoquinol (DDMQH2) to 2-polyprenyl-3-methyl-6-methoxy-1,4-benzoquinol (DMQH2). The protein is Ubiquinone/menaquinone biosynthesis C-methyltransferase UbiE of Shewanella woodyi (strain ATCC 51908 / MS32).